Consider the following 365-residue polypeptide: Histidinol-phosphate aminotransferase (365 aa).

Lys221 bears the N6-(pyridoxal phosphate)lysine mark.

It belongs to the class-II pyridoxal-phosphate-dependent aminotransferase family. Histidinol-phosphate aminotransferase subfamily. As to quaternary structure, homodimer. Requires pyridoxal 5'-phosphate as cofactor.

It catalyses the reaction L-histidinol phosphate + 2-oxoglutarate = 3-(imidazol-4-yl)-2-oxopropyl phosphate + L-glutamate. Its pathway is amino-acid biosynthesis; L-histidine biosynthesis; L-histidine from 5-phospho-alpha-D-ribose 1-diphosphate: step 7/9. In Nitrobacter hamburgensis (strain DSM 10229 / NCIMB 13809 / X14), this protein is Histidinol-phosphate aminotransferase.